Here is a 477-residue protein sequence, read N- to C-terminus: PTS system MurNAc-GlcNAc-specific EIIBC component (477 aa).

Residues 5 to 87 (QQLAHHILDA…VKLSGVQLGE (83 aa)) form the PTS EIIB type-1 domain. Catalysis depends on cysteine 27, which acts as the Phosphocysteine intermediate; for EIIB activity. Residues 91–113 (HRSNTSNIKNQAQQNKREFQQKR) form a disordered region. Positions 92 to 104 (RSNTSNIKNQAQQ) are enriched in polar residues. Positions 123 to 477 (KSIANIFIPL…EMRNLNKLGD (355 aa)) constitute a PTS EIIC type-1 domain. A run of 10 helical transmembrane segments spans residues 128-148 (IFIPLIPAFIGAGLIGGIAAV), 167-187 (VAVLNVIKDGMLAYLAIFTGF), 192-212 (VFGATPGLGGVIGGTTLLTGI), 227-247 (LIAGQGGIIGVILAVWLLSII), 267-287 (ISLLIIGLLTIFFFMPIAGFI), 298-318 (VIGVGGIFSGFIIGAFFLPLV), 342-362 (LLPIAAMAGAGQVGAALALWV), 377-397 (ALPVGFLGIGEPLIYGVTLPL), 401-421 (FITACLGGGIGGAVIGGIGHI), and 443-463 (LGYIIGLLSAYLAGFIFTYFF).

The protein localises to the cell membrane. It carries out the reaction N-acetyl-beta-D-muramate-(1-&gt;4)-N-acetyl-D-glucosamine(out) + N(pros)-phospho-L-histidyl-[protein] = 6-phospho-N-acetyl-beta-D-muramate-(1-&gt;4)-N-acetyl-D-glucosamine(in) + L-histidyl-[protein]. The protein operates within cell wall biogenesis; peptidoglycan recycling. The phosphoenolpyruvate-dependent sugar phosphotransferase system (sugar PTS), a major carbohydrate active transport system, catalyzes the phosphorylation of incoming sugar substrates concomitantly with their translocation across the cell membrane. This system is involved in the uptake and phosphorylation of MurNAc-GlcNAc, the principle peptidoglycan turnover product of S.aureus, yielding cytoplasmic MurNAc 6P-GlcNAc. The sequence is that of PTS system MurNAc-GlcNAc-specific EIIBC component from Staphylococcus haemolyticus (strain JCSC1435).